A 106-amino-acid chain; its full sequence is Nucleoid-associated protein BRADO0764 (106 aa).

This sequence belongs to the YbaB/EbfC family. Homodimer.

Its subcellular location is the cytoplasm. The protein resides in the nucleoid. In terms of biological role, binds to DNA and alters its conformation. May be involved in regulation of gene expression, nucleoid organization and DNA protection. The polypeptide is Nucleoid-associated protein BRADO0764 (Bradyrhizobium sp. (strain ORS 278)).